Reading from the N-terminus, the 113-residue chain is MNTVRVTFLLVFVLAVSLGQADKDENRMEMQEKTEQGKSYLDFAENLLLQKLEELEAKLLEEDSEESRNSRQKRCIGEGVPCDENDPRCCSGLVCLKPALHGIWYKSYYCYKK.

Residues 1–21 (MNTVRVTFLLVFVLAVSLGQA) form the signal peptide. The propeptide occupies 22-74 (DKDENRMEMQEKTEQGKSYLDFAENLLLQKLEELEAKLLEEDSEESRNSRQKR). The disordered stretch occupies residues 61–83 (EEDSEESRNSRQKRCIGEGVPCD). 3 disulfides stabilise this stretch: Cys-75–Cys-90, Cys-82–Cys-95, and Cys-89–Cys-110.

It belongs to the neurotoxin 14 (magi-1) family. 01 (HNTX-16) subfamily. As to expression, expressed by the venom gland.

It is found in the secreted. In terms of biological role, probable ion channel inhibitor. The polypeptide is U11-theraphotoxin-Hhn1p (Cyriopagopus hainanus (Chinese bird spider)).